A 745-amino-acid polypeptide reads, in one-letter code: Double-stranded RNA-specific editase B2 (745 aa).

Disordered regions lie at residues methionine 1 to lysine 35 and serine 50 to glutamate 104. Residues cysteine 20–aspartate 34 are compositionally biased toward basic residues. Residues lysine 23–lysine 35 are R-domain (ssRNA-binding). 2 DRBM domains span residues threonine 125–glutamine 191 and asparagine 283–aspartate 347. An A to I editase domain is found at valine 414–phenylalanine 741. Zn(2+) is bound at residue histidine 438. Glutamate 440 serves as the catalytic Proton donor. The Zn(2+) site is built by cysteine 496 and cysteine 561.

In terms of tissue distribution, brain specific.

The protein localises to the nucleus. Functionally, lacks editing activity. It prevents the binding of other ADAR enzymes to targets in vitro, and decreases the efficiency of these enzymes. Capable of binding to dsRNA but also to ssRNA. This Mus musculus (Mouse) protein is Double-stranded RNA-specific editase B2 (Adarb2).